The primary structure comprises 504 residues: Occludin (504 aa).

Over 1-57 the chain is Cytoplasmic; the sequence is MFSKKSYDGPPAGYGPPTGYGAPTADYGYGSPPPGSYYVDDAPQLFYKWTSPPGAVR. The MARVEL domain occupies 51–253; the sequence is SPPGAVRGLQ…ICFFAQKTRS (203 aa). A helical membrane pass occupies residues 58 to 80; sequence GLQAGVLVLCIAIFACVASTLAW. Over 81 to 123 the chain is Extracellular; sequence DYGYGLGGAYGTGLGGFYGSNYYGSGLSYSYGYGGYYGGVNQR. A helical membrane pass occupies residues 124–148; sequence TANGFMIAMAVLCFLAQLGLLVAAL. At 149–158 the chain is on the cytoplasmic side; the sequence is SKSGATRSRR. Residues 159 to 183 traverse the membrane as a helical segment; it reads FYLAVLVLSAVLAFVMLIASIVYIM. The Extracellular segment spans residues 184–227; it reads GVNPQAQMSSGYYYSPLLAMCSQAYGSTYLNQYIYHYCTVDPQE. Residues C204 and C221 are joined by a disulfide bond. The chain crosses the membrane as a helical span at residues 228–249; sequence AVAAVCGFLIVILLCLICFFAQ. Residues 250 to 504 are Cytoplasmic-facing; that stretch reads KTRSKIWRYG…MVSAYDKVRG (255 aa). The disordered stretch occupies residues 324–396; sequence PSGTYSSRGD…VESSDERDQE (73 aa). Positions 361-370 are enriched in basic residues; that stretch reads PARRGRRRRR. Phosphotyrosine is present on residues Y379 and Y383. The interaction with TJP1 stretch occupies residues 379–385; that stretch reads YETDYTT. In terms of domain architecture, OCEL spans 396 to 504; the sequence is EQWASLYPPI…MVSAYDKVRG (109 aa). Residues 412–471 adopt a coiled-coil conformation; the sequence is QRYKQEFDTDLKRYKQLCAEMDSINDRLNQLSRRLDSITEDSPQYQDVAEEYNQLKDLKR.

It belongs to the ELL/occludin family. Interacts with TJP1 and TJP3. Post-translationally, phosphorylated. In terms of tissue distribution, localized at tight junctions of both epithelial and endothelial cells. Highly expressed in lung and liver. Expressed at a lower level in brain.

Its subcellular location is the cell membrane. The protein resides in the cell junction. It localises to the tight junction. In terms of biological role, may play a role in the formation and regulation of the tight junction (TJ) paracellular permeability barrier. Interacts with ZO-1. The protein is Occludin (OCLN) of Gallus gallus (Chicken).